Consider the following 318-residue polypeptide: tRNA U34 carboxymethyltransferase (318 aa).

The carboxy-S-adenosyl-L-methionine site is built by lysine 88, tryptophan 102, lysine 107, glycine 126, methionine 192, tyrosine 196, and arginine 311.

It belongs to the class I-like SAM-binding methyltransferase superfamily. CmoB family. Homotetramer.

The enzyme catalyses carboxy-S-adenosyl-L-methionine + 5-hydroxyuridine(34) in tRNA = 5-carboxymethoxyuridine(34) in tRNA + S-adenosyl-L-homocysteine + H(+). Its function is as follows. Catalyzes carboxymethyl transfer from carboxy-S-adenosyl-L-methionine (Cx-SAM) to 5-hydroxyuridine (ho5U) to form 5-carboxymethoxyuridine (cmo5U) at position 34 in tRNAs. The sequence is that of tRNA U34 carboxymethyltransferase from Pseudomonas fluorescens (strain ATCC BAA-477 / NRRL B-23932 / Pf-5).